Here is a 137-residue protein sequence, read N- to C-terminus: Photosystem II reaction center W protein, chloroplastic (137 aa).

A chloroplast-targeting transit peptide spans 1–64 (MATITASSSA…ETTTTTNKSM (64 aa)). A thylakoid-targeting transit peptide spans 65-83 (GASLLAAAAAATISNPAMA). Residues 84 to 103 (LVDERMSTEGTGLPFGLSNN) are Lumenal, thylakoid-facing. Residues 104 to 123 (LLGWILFGVFGLIWALYFVY) form a helical membrane-spanning segment. Residues 124 to 137 (ASGLEEDEESGLSL) lie on the Stromal side of the membrane.

In terms of assembly, part of the photosystem II complex. PSII is composed of 1 copy each of membrane proteins PsbA, PsbB, PsbC, PsbD, numerous small proteins, at least 3 peripheral proteins of the oxygen-evolving complex and a large number of cofactors. It forms dimeric complexes.

The protein localises to the plastid. It localises to the chloroplast thylakoid membrane. Its function is as follows. Stabilizes dimeric photosystem II (PSII). In its absence no dimeric PSII accumulates and there is a reduction of monomeric PSII. The chain is Photosystem II reaction center W protein, chloroplastic from Spinacia oleracea (Spinach).